We begin with the raw amino-acid sequence, 280 residues long: Diaminopimelate epimerase (280 aa).

3 residues coordinate substrate: Asn-12, Gln-45, and Asn-65. Residue Cys-74 is the Proton donor of the active site. Substrate is bound by residues 75-76, Asn-163, Asn-196, and 214-215; these read GN and ER. Cys-223 serves as the catalytic Proton acceptor. A substrate-binding site is contributed by 224 to 225; that stretch reads GT.

Belongs to the diaminopimelate epimerase family. In terms of assembly, homodimer.

Its subcellular location is the cytoplasm. It carries out the reaction (2S,6S)-2,6-diaminopimelate = meso-2,6-diaminopimelate. The protein operates within amino-acid biosynthesis; L-lysine biosynthesis via DAP pathway; DL-2,6-diaminopimelate from LL-2,6-diaminopimelate: step 1/1. Its function is as follows. Catalyzes the stereoinversion of LL-2,6-diaminopimelate (L,L-DAP) to meso-diaminopimelate (meso-DAP), a precursor of L-lysine and an essential component of the bacterial peptidoglycan. This is Diaminopimelate epimerase from Shewanella sediminis (strain HAW-EB3).